The primary structure comprises 134 residues: Retinol-binding protein 2 (134 aa).

2 residues coordinate all-trans-retinol: lysine 41 and glutamine 109.

Belongs to the calycin superfamily. Fatty-acid binding protein (FABP) family.

The protein localises to the cytoplasm. Its function is as follows. Intracellular transport of retinol. The polypeptide is Retinol-binding protein 2 (RBP2) (Sus scrofa (Pig)).